Reading from the N-terminus, the 274-residue chain is Elongation factor Ts (274 aa).

The interval 76–79 (TDFV) is involved in Mg(2+) ion dislocation from EF-Tu.

The protein belongs to the EF-Ts family.

Its subcellular location is the cytoplasm. Its function is as follows. Associates with the EF-Tu.GDP complex and induces the exchange of GDP to GTP. It remains bound to the aminoacyl-tRNA.EF-Tu.GTP complex up to the GTP hydrolysis stage on the ribosome. The chain is Elongation factor Ts from Mycobacterium sp. (strain JLS).